Consider the following 273-residue polypeptide: 1,4-dihydroxy-2-naphthoyl-CoA synthase (273 aa).

Residues arginine 34, 73–77, tyrosine 85, 117–121, threonine 143, serine 149, tyrosine 246, and lysine 261 each bind substrate; these read SGGDQ and YAVGG. Position 142–144 (142–144) interacts with hydrogencarbonate; that stretch reads QTG. A compositionally biased stretch (basic and acidic residues) spans 254–265; it reads GRDAFKEKRDPD. Positions 254-273 are disordered; the sequence is GRDAFKEKRDPDFDQFPKFP.

Belongs to the enoyl-CoA hydratase/isomerase family. MenB subfamily. Hydrogencarbonate is required as a cofactor.

It carries out the reaction 2-succinylbenzoyl-CoA + H(+) = 1,4-dihydroxy-2-naphthoyl-CoA + H2O. It participates in quinol/quinone metabolism; 1,4-dihydroxy-2-naphthoate biosynthesis; 1,4-dihydroxy-2-naphthoate from chorismate: step 6/7. It functions in the pathway quinol/quinone metabolism; menaquinone biosynthesis. Functionally, converts o-succinylbenzoyl-CoA (OSB-CoA) to 1,4-dihydroxy-2-naphthoyl-CoA (DHNA-CoA). This is 1,4-dihydroxy-2-naphthoyl-CoA synthase from Staphylococcus aureus (strain MSSA476).